The following is a 629-amino-acid chain: Genetic interactor of prohibitins 3, mitochondrial (629 aa).

The transit peptide at Met1–Tyr19 directs the protein to the mitochondrion. A disordered region spans residues Lys52–Lys71. The CP-type G domain maps to Ile171–Asn374.

This sequence belongs to the TRAFAC class YlqF/YawG GTPase family. GEP3 subfamily.

It localises to the mitochondrion. In terms of biological role, may be involved in the mitochondrial lipid metabolism. The protein is Genetic interactor of prohibitins 3, mitochondrial (GEP3) of Candida albicans (strain SC5314 / ATCC MYA-2876) (Yeast).